Here is a 145-residue protein sequence, read N- to C-terminus: Secreted RxLR effector protein 100 (145 aa).

The signal sequence occupies residues 1-19 (MRYLLLTFFTFHCQMVADA). The RxLR motif lies at 27–30 (RLLR). The tract at residues 38–77 (SGEGKIEEAGMIVTTGAPTPENETMEHNEVPQSTTDTDQK) is disordered. N59 carries an N-linked (GlcNAc...) asparagine glycan.

Belongs to the RxLR effector family.

It localises to the secreted. Its subcellular location is the host nucleus. Functionally, secreted effector that dos not suppress the host cell death induced by cell death-inducing proteins. The chain is Secreted RxLR effector protein 100 from Plasmopara viticola (Downy mildew of grapevine).